The chain runs to 492 residues: Catalase isozyme 3 (492 aa).

Catalysis depends on residues H65 and N138. Y348 provides a ligand contact to heme.

It belongs to the catalase family. Homotetramer. Heme is required as a cofactor.

The protein resides in the peroxisome. It carries out the reaction 2 H2O2 = O2 + 2 H2O. Its function is as follows. Occurs in almost all aerobically respiring organisms and serves to protect cells from the toxic effects of hydrogen peroxide. In Nicotiana plumbaginifolia (Leadwort-leaved tobacco), this protein is Catalase isozyme 3 (CAT3).